We begin with the raw amino-acid sequence, 82 residues long: Delta-actitoxin-Aeq2b 2 (82 aa).

Residues 1–19 (MNRLMILVFAAVFLALASA) form the signal peptide. A propeptide spanning residues 20-26 (DEDVDIA) is cleaved from the precursor. Intrachain disulfides connect Cys32/Cys79, Cys34/Cys69, and Cys62/Cys80.

This sequence belongs to the sea anemone sodium channel inhibitory toxin family. Type I subfamily.

It localises to the secreted. Its subcellular location is the nematocyst. Functionally, binds specifically to voltage-gated sodium channels (Nav), thereby delaying their inactivation during signal transduction. Causes death to crabs. This chain is Delta-actitoxin-Aeq2b 2, found in Actinia equina (Beadlet anemone).